A 205-amino-acid polypeptide reads, in one-letter code: Probable GTP-binding protein EngB (205 aa).

The region spanning 22-198 is the EngB-type G domain; the sequence is HLPEYAFIGR…LSYIDEVNQD (177 aa). GTP contacts are provided by residues 30-37, 57-61, 75-78, 142-145, and 177-179; these read GRSNVGKS, GKTQL, DLPG, TKAD, and TSA. Mg(2+) is bound by residues serine 37 and threonine 59.

Belongs to the TRAFAC class TrmE-Era-EngA-EngB-Septin-like GTPase superfamily. EngB GTPase family. The cofactor is Mg(2+).

Functionally, necessary for normal cell division and for the maintenance of normal septation. In Flavobacterium psychrophilum (strain ATCC 49511 / DSM 21280 / CIP 103535 / JIP02/86), this protein is Probable GTP-binding protein EngB.